A 465-amino-acid polypeptide reads, in one-letter code: GTPase Der (465 aa).

EngA-type G domains follow at residues 3-167 (PLVA…PERS) and 179-352 (IHIA…VSAL). GTP is bound by residues 9 to 16 (GRPNVGKS), 57 to 61 (DTGGM), 119 to 122 (NKID), 185 to 192 (GRPNVGKS), 232 to 236 (DTAGL), and 297 to 300 (NKWD). Positions 353–437 (RQFSTSEVNK…PVRFLFREGD (85 aa)) constitute a KH-like domain.

Belongs to the TRAFAC class TrmE-Era-EngA-EngB-Septin-like GTPase superfamily. EngA (Der) GTPase family. As to quaternary structure, associates with the 50S ribosomal subunit.

Functionally, GTPase that plays an essential role in the late steps of ribosome biogenesis. This is GTPase Der from Xylella fastidiosa (strain M23).